The chain runs to 377 residues: MTDIKQILTDLIGFPSITPEDAGCQKYMIQFLEQLGFTCQQLNNGPVSNFFACYGKIGPLLVFAGHTDVVPVGEVSKWDTDPFSLEEKSGVLYGRGVADMKGSLACMLHMARRFIKTYPSFPGRLGFLITSGEEGDEFNLGTPYVMQKLEQQGIVIDYCIVGEPSSSLKAGDVIKIGRRGSLSAKIHLSGKQGHVAYPHLADNPIHRISPVLAELTSMQWDNGNAFFPPTSMQITYIHCGGHAGNIIPGELNLHLNFRYSTEQTDESLKTRVINAFTHHNLNPAIEWRLNGEPFLTNKGILLESCKQTVLEHIGTLPELSTSGGTSDGRFIAPYGVEVIELGLVNATIHQVNECTSLQDLNTLETMYFSICEKLLID.

A Zn(2+)-binding site is contributed by His-66. Residue Asp-68 is part of the active site. Asp-99 is a Zn(2+) binding site. Glu-133 functions as the Proton acceptor in the catalytic mechanism. Glu-134, Glu-163, and His-349 together coordinate Zn(2+).

The protein belongs to the peptidase M20A family. DapE subfamily. In terms of assembly, homodimer. The cofactor is Zn(2+). Co(2+) is required as a cofactor.

The enzyme catalyses N-succinyl-(2S,6S)-2,6-diaminopimelate + H2O = (2S,6S)-2,6-diaminopimelate + succinate. The protein operates within amino-acid biosynthesis; L-lysine biosynthesis via DAP pathway; LL-2,6-diaminopimelate from (S)-tetrahydrodipicolinate (succinylase route): step 3/3. In terms of biological role, catalyzes the hydrolysis of N-succinyl-L,L-diaminopimelic acid (SDAP), forming succinate and LL-2,6-diaminopimelate (DAP), an intermediate involved in the bacterial biosynthesis of lysine and meso-diaminopimelic acid, an essential component of bacterial cell walls. This Legionella pneumophila (strain Paris) protein is Succinyl-diaminopimelate desuccinylase.